The primary structure comprises 134 residues: Cytochrome c-type biogenesis protein CcmE (134 aa).

The Cytoplasmic portion of the chain corresponds to 1-7 (MKRKYRR). The helical; Signal-anchor for type II membrane protein transmembrane segment at 8–28 (LFVVIITLSIFAGSVVLVLGK) threads the bilayer. At 29–134 (LKNNVSFFYT…MPNKYKTNDL (106 aa)) the chain is on the periplasmic side. Heme contacts are provided by His120 and Tyr124.

This sequence belongs to the CcmE/CycJ family.

It is found in the cell inner membrane. Its function is as follows. Heme chaperone required for the biogenesis of c-type cytochromes. Transiently binds heme delivered by CcmC and transfers the heme to apo-cytochromes in a process facilitated by CcmF and CcmH. The chain is Cytochrome c-type biogenesis protein CcmE from Ehrlichia ruminantium (strain Welgevonden).